A 1019-amino-acid polypeptide reads, in one-letter code: Photoactivated adenylate cyclase subunit alpha-like protein FB (1019 aa).

The region spanning 55–148 (LRRLMYLSAS…GRLYGEWHMK (94 aa)) is the BLUF 1 domain. The Guanylate cyclase 1 domain maps to 204–332 (VVTFIYLVEF…DCINTASRIT (129 aa)). The BLUF 2 domain maps to 467–559 (LITLTYISQA…REYGSPLDMT (93 aa)). The Guanylate cyclase 2 domain occupies 615-744 (VLLATDICSF…EVSARVMEVV (130 aa)). Residues 825–839 (APGRGAPAGGIPSSP) are compositionally biased toward low complexity. Residues 825–862 (APGRGAPAGGIPSSPKVRPPGRTNSVSSYTPDPNEALD) form a disordered region. Positions 846-855 (RTNSVSSYTP) are enriched in polar residues.

This sequence belongs to the adenylyl cyclase class-4/guanylyl cyclase family. Heterotetramer of two alpha and two beta subunits.

It localises to the cell projection. It is found in the cilium. Its subcellular location is the flagellum. This is Photoactivated adenylate cyclase subunit alpha-like protein FB from Euglena gracilis.